The chain runs to 552 residues: CTP synthase (552 aa).

Positions 1-270 (MTKYVFVTGG…DRIICEELKL (270 aa)) are amidoligase domain. Ser-13 serves as a coordination point for CTP. Residue Ser-13 coordinates UTP. ATP contacts are provided by residues 14 to 19 (SLGKGI) and Asp-71. Residues Asp-71 and Glu-144 each coordinate Mg(2+). CTP is bound by residues 151–153 (DIE), 191–196 (KTKPTQ), and Lys-227. Residues 191–196 (KTKPTQ) and Lys-227 each bind UTP. Positions 295-547 (TIGMVGKYVD…VEAALANKQA (253 aa)) constitute a Glutamine amidotransferase type-1 domain. Gly-356 contributes to the L-glutamine binding site. Cys-383 functions as the Nucleophile; for glutamine hydrolysis in the catalytic mechanism. L-glutamine-binding positions include 384 to 387 (LGMQ), Glu-407, and Arg-473. Catalysis depends on residues His-520 and Glu-522.

The protein belongs to the CTP synthase family. In terms of assembly, homotetramer.

The catalysed reaction is UTP + L-glutamine + ATP + H2O = CTP + L-glutamate + ADP + phosphate + 2 H(+). The enzyme catalyses L-glutamine + H2O = L-glutamate + NH4(+). It carries out the reaction UTP + NH4(+) + ATP = CTP + ADP + phosphate + 2 H(+). It functions in the pathway pyrimidine metabolism; CTP biosynthesis via de novo pathway; CTP from UDP: step 2/2. Allosterically activated by GTP, when glutamine is the substrate; GTP has no effect on the reaction when ammonia is the substrate. The allosteric effector GTP functions by stabilizing the protein conformation that binds the tetrahedral intermediate(s) formed during glutamine hydrolysis. Inhibited by the product CTP, via allosteric rather than competitive inhibition. Functionally, catalyzes the ATP-dependent amination of UTP to CTP with either L-glutamine or ammonia as the source of nitrogen. Regulates intracellular CTP levels through interactions with the four ribonucleotide triphosphates. This chain is CTP synthase, found in Burkholderia cenocepacia (strain ATCC BAA-245 / DSM 16553 / LMG 16656 / NCTC 13227 / J2315 / CF5610) (Burkholderia cepacia (strain J2315)).